Here is a 358-residue protein sequence, read N- to C-terminus: Trans-anol O-methyltransferase 1 (358 aa).

S-adenosyl-L-methionine-binding residues include G201, D224, D244, M245, and R259. The Proton acceptor role is filled by H262.

Belongs to the class I-like SAM-binding methyltransferase superfamily. Cation-independent O-methyltransferase family. COMT subfamily. As to expression, highly expressed in developing fruits. Expressed at low levels in roots, young leaves, buds and flowers.

The catalysed reaction is (E)-anol + S-adenosyl-L-methionine = (E)-anethole + S-adenosyl-L-homocysteine + H(+). It carries out the reaction (E)-isoeugenol + S-adenosyl-L-methionine = (E)-isomethyleugenol + S-adenosyl-L-homocysteine + H(+). It participates in aromatic compound metabolism; phenylpropanoid biosynthesis. Its activity is regulated as follows. Inhibited by zinc and copper. Phenylpropene O-methyltransferase that catalyzes the conversion of trans-anol to trans-anethole and isoeugenol to isomethyleugenol. Phenylpropenes are the primary constituents of various essential plant oils. They are produced as antimicrobial and antianimal compounds, or as floral attractants of pollinators. The protein is Trans-anol O-methyltransferase 1 (AIMT1) of Pimpinella anisum (Anise).